The chain runs to 159 residues: Serine-protein kinase RsbW (159 aa).

The protein belongs to the anti-sigma-factor family.

It carries out the reaction L-seryl-[protein] + ATP = O-phospho-L-seryl-[protein] + ADP + H(+). The enzyme catalyses L-threonyl-[protein] + ATP = O-phospho-L-threonyl-[protein] + ADP + H(+). Negative regulator of sigma-B activity. Phosphorylates and inactivates its specific antagonist protein, RsbV. Upon phosphorylation of RsbV, RsbW is released and binds to sigma-B, thereby blocking its ability to form an RNA polymerase holoenzyme (E-sigma-B). In Staphylococcus aureus, this protein is Serine-protein kinase RsbW.